Here is a 535-residue protein sequence, read N- to C-terminus: Dual specificity calcium/calmodulin-dependent 3',5'-cyclic nucleotide phosphodiesterase 1B (535 aa).

The disordered stretch occupies residues 1-21 (MELSPRSPPEMLESDCPSPLE). Ser-7 and Ser-14 each carry phosphoserine. Calmodulin-binding stretches follow at residues 26–46 (PSKK…KQLE) and 117–140 (EKPK…MFRR). The PDEase domain occupies 145 to 502 (VGPTYSTAVH…QKWKERAASG (358 aa)). Catalysis depends on His-222, which acts as the Proton donor. His-226, His-262, Asp-263, and Asp-369 together coordinate Zn(2+). Residue Asp-263 participates in Mg(2+) binding. Disordered regions lie at residues 445–474 (PLAD…GDPN) and 495–535 (WKER…GNLD). Residues 454-463 (KSQPSFQWRQ) are compositionally biased toward polar residues. Phosphoserine is present on residues Ser-465 and Ser-513.

The protein belongs to the cyclic nucleotide phosphodiesterase family. PDE1 subfamily. In terms of assembly, homodimer. Requires Zn(2+) as cofactor. Mg(2+) is required as a cofactor.

It is found in the cytoplasm. It localises to the cytosol. The catalysed reaction is a nucleoside 3',5'-cyclic phosphate + H2O = a nucleoside 5'-phosphate + H(+). The enzyme catalyses 3',5'-cyclic GMP + H2O = GMP + H(+). It catalyses the reaction 3',5'-cyclic AMP + H2O = AMP + H(+). Type I PDE are activated by the binding of calmodulin in the presence of Ca(2+). Its function is as follows. Cyclic nucleotide phosphodiesterase with a dual specificity for the second messengers cAMP and cGMP, which are key regulators of many important physiological processes. Has a preference for cGMP as a substrate. In Cricetulus griseus (Chinese hamster), this protein is Dual specificity calcium/calmodulin-dependent 3',5'-cyclic nucleotide phosphodiesterase 1B.